The following is a 348-amino-acid chain: D-erythrose-4-phosphate dehydrogenase (348 aa).

Residues 12 to 13 (RI) and Arg-81 contribute to the NAD(+) site. Substrate-binding positions include 154-156 (SCT), Arg-200, 213-214 (TK), and Arg-236. Cys-155 functions as the Nucleophile in the catalytic mechanism. Asn-318 is a binding site for NAD(+).

This sequence belongs to the glyceraldehyde-3-phosphate dehydrogenase family. Epd subfamily. As to quaternary structure, homotetramer.

The protein resides in the cytoplasm. It carries out the reaction D-erythrose 4-phosphate + NAD(+) + H2O = 4-phospho-D-erythronate + NADH + 2 H(+). Its pathway is cofactor biosynthesis; pyridoxine 5'-phosphate biosynthesis; pyridoxine 5'-phosphate from D-erythrose 4-phosphate: step 1/5. Catalyzes the NAD-dependent conversion of D-erythrose 4-phosphate to 4-phosphoerythronate. The polypeptide is D-erythrose-4-phosphate dehydrogenase (Salmonella gallinarum (strain 287/91 / NCTC 13346)).